The primary structure comprises 118 residues: Large ribosomal subunit protein bL19 (118 aa).

Belongs to the bacterial ribosomal protein bL19 family.

Its function is as follows. This protein is located at the 30S-50S ribosomal subunit interface and may play a role in the structure and function of the aminoacyl-tRNA binding site. The protein is Large ribosomal subunit protein bL19 of Campylobacter lari (strain RM2100 / D67 / ATCC BAA-1060).